Reading from the N-terminus, the 105-residue chain is ESAT-6-like protein EsxB (105 aa).

Residues 1 to 23 (MSQGFKTEADVMRNTAHRVDDTN) are disordered. Basic and acidic residues predominate over residues 7 to 21 (TEADVMRNTAHRVDD).

It belongs to the WXG100 family. CFP-10 subfamily. As to quaternary structure, forms a tight 1:1 complex with EsxB.

In Corynebacterium diphtheriae (strain ATCC 700971 / NCTC 13129 / Biotype gravis), this protein is ESAT-6-like protein EsxB.